Reading from the N-terminus, the 233-residue chain is Small ribosomal subunit protein uS3 (233 aa).

The KH type-2 domain occupies 39–107; it reads VRQFLTKELS…PAQINIAEVR (69 aa).

Belongs to the universal ribosomal protein uS3 family. Part of the 30S ribosomal subunit. Forms a tight complex with proteins S10 and S14.

In terms of biological role, binds the lower part of the 30S subunit head. Binds mRNA in the 70S ribosome, positioning it for translation. The sequence is that of Small ribosomal subunit protein uS3 from Vibrio vulnificus (strain CMCP6).